The primary structure comprises 110 residues: MKVTGYYVIVAALLALALRAGPSLAADDRNQDCGPATSDPRANLNGADKAHSAEHTQDFNCQDTPAEEGECYECVLPPEVRIEGAEVIDVADRNFYPRKTLLLARMIRHH.

Residues 1-25 (MKVTGYYVIVAALLALALRAGPSLA) form the signal peptide. The interval 27 to 64 (DDRNQDCGPATSDPRANLNGADKAHSAEHTQDFNCQDT) is disordered. The segment covering 48–57 (DKAHSAEHTQ) has biased composition (basic and acidic residues).

It localises to the periplasm. This chain is Nodulation protein NolE (nolE), found in Rhizobium leguminosarum bv. phaseoli.